The sequence spans 837 residues: Enterin neuropeptides (837 aa).

An N-terminal signal peptide occupies residues 1 to 25 (MAKHDVTVMTLLLVVCALHVFDAQG). Positions 26-47 (TDVKLNDGFLRSGIMNIPFQRR) are excised as a propeptide. Valine amide is present on Val-57. The propeptide occupies 61–134 (SGFQSPVSPS…ENKRFSKENE (74 aa)). Val-146 bears the Valine amide mark. Residues 150 to 178 (MDLSALEKELIAKLKAADLLSPLETEAPG) constitute a propeptide that is removed on maturation. At Leu-190 the chain carries Leucine amide. Positions 194-201 (MPVDVFPR) are excised as a propeptide. At Val-211 the chain carries Valine amide. Residues 215-234 (SGNGENYFDDLDTFGDISQR) constitute a propeptide that is removed on maturation. Val-244 carries the valine amide modification. Positions 248 to 266 (GNTDFSRNPLARLSQVQNR) are excised as a propeptide. Position 276 is a valine amide (Val-276). The propeptide occupies 280–285 (SVHNIV). The residue at position 297 (Val-297) is a Valine amide. The propeptide occupies 301–325 (DFEDASEGLDEEEGDIDGYSDDLDV). A valine amide mark is found at Val-336, Val-348, Val-360, Val-372, Val-384, Val-396, Val-408, Val-420, Val-432, Val-444, Val-456, Val-468, Val-480, Val-492, Val-504, Val-516, Val-528, and Val-540. Residues 544–595 (ELGEDEINFLKEVDAADISRQLAEEDEKEAMVSVDDKETLSNEEDASEDDFE) constitute a propeptide that is removed on maturation. The interval 567–594 (EEDEKEAMVSVDDKETLSNEEDASEDDF) is disordered. Residues 584-593 (SNEEDASEDD) show a composition bias toward acidic residues. Glu-598 carries the post-translational modification Pyrrolidone carboxylic acid (Glu); in form ENl'. At Val-606 the chain carries Valine amide. Positions 610–627 (DEEGDMGVEMEEEMESEK) are excised as a propeptide. Leucine amide is present on Leu-637. Residue Gln-641 is modified to Pyrrolidone carboxylic acid. The residue at position 649 (Val-649) is a Valine amide. Gln-653 bears the Pyrrolidone carboxylic acid mark. 2 positions are modified to valine amide: Val-661 and Val-673. Gln-677 bears the Pyrrolidone carboxylic acid mark. Val-685 and Val-697 each carry valine amide. At Gln-701 the chain carries Pyrrolidone carboxylic acid. Val-709 is subject to Valine amide. Gln-713 bears the Pyrrolidone carboxylic acid mark. At Val-721 the chain carries Valine amide. Gln-725 is modified (pyrrolidone carboxylic acid). Val-733 bears the Valine amide mark. A propeptide spanning residues 734-837 (GKRSGAEDID…DSHIMATSST (104 aa)) is cleaved from the precursor. The segment at 772 to 837 (GQPAAANEEE…DSHIMATSST (66 aa)) is disordered. Residues 778 to 791 (NEEELQQEAAEESE) show a composition bias toward acidic residues.

In terms of tissue distribution, high expression in gut and CNS.

The protein resides in the secreted. Functionally, reduce interneurons B4/5 activity. May play a regulatory role in nonfeeding behaviors. The protein is Enterin neuropeptides (ENPP) of Aplysia californica (California sea hare).